The chain runs to 86 residues: Sugar transporter SemiSWEET (86 aa).

A run of 3 helical transmembrane segments spans residues 3-23 (PFLIKLIGFAAATCTTVAYAP), 37-57 (ISLGMFLVMVLGLALWLIYGL), and 61-81 (DAPLIASNAVTMLLAGGILVM). The region spanning 6 to 63 (IKLIGFAAATCTTVAYAPQFIKVLKTRSARDISLGMFLVMVLGLALWLIYGLLSGDAP) is the PQ-loop domain.

In terms of assembly, homodimer. Homooligomer.

The protein resides in the cell membrane. In terms of biological role, mediates sucrose transmembrane transport down a concentration gradient. In Bradyrhizobium diazoefficiens (strain JCM 10833 / BCRC 13528 / IAM 13628 / NBRC 14792 / USDA 110), this protein is Sugar transporter SemiSWEET.